We begin with the raw amino-acid sequence, 435 residues long: Serine--tRNA ligase (435 aa).

242–244 (TAE) contributes to the L-serine binding site. 273 to 275 (RSE) contributes to the ATP binding site. E296 lines the L-serine pocket. Position 360 to 363 (360 to 363 (EISS)) interacts with ATP. Residue S396 coordinates L-serine.

This sequence belongs to the class-II aminoacyl-tRNA synthetase family. Type-1 seryl-tRNA synthetase subfamily. As to quaternary structure, homodimer. The tRNA molecule binds across the dimer.

Its subcellular location is the cytoplasm. The enzyme catalyses tRNA(Ser) + L-serine + ATP = L-seryl-tRNA(Ser) + AMP + diphosphate + H(+). It catalyses the reaction tRNA(Sec) + L-serine + ATP = L-seryl-tRNA(Sec) + AMP + diphosphate + H(+). It participates in aminoacyl-tRNA biosynthesis; selenocysteinyl-tRNA(Sec) biosynthesis; L-seryl-tRNA(Sec) from L-serine and tRNA(Sec): step 1/1. Catalyzes the attachment of serine to tRNA(Ser). Is also able to aminoacylate tRNA(Sec) with serine, to form the misacylated tRNA L-seryl-tRNA(Sec), which will be further converted into selenocysteinyl-tRNA(Sec). The protein is Serine--tRNA ligase of Vibrio campbellii (strain ATCC BAA-1116).